We begin with the raw amino-acid sequence, 100 residues long: uncharacterized protein (100 aa).

This is an uncharacterized protein from Mycoplasma pneumoniae (strain ATCC 29342 / M129 / Subtype 1) (Mycoplasmoides pneumoniae).